A 187-amino-acid chain; its full sequence is UPF0340 protein SMU_87 (187 aa).

This sequence belongs to the UPF0340 family.

This chain is UPF0340 protein SMU_87, found in Streptococcus mutans serotype c (strain ATCC 700610 / UA159).